The chain runs to 550 residues: MTIYPNLKKIMTKTQSTDFFIACKESRIENNTNFYGCFYLGPFDESLSQTLANDLRRTLLSELTGLAITSIEIEGVLHKFSTLTGMKEPVLDLICNLQNIVLRKETISSTNMNYRATKKTYIGFLSVNGPRVIKAADLKLPAGLQCVDPNQYIATLAEDGFLNMKFNINEGKNYIKQKPYNLDVTTLKKRNILLQNFKNKIGLTALKNKQLMSTTMEGKPLLSNSDNLRFKKSFKRMLTSPNQSLKNKTSLGHDTVSNPIPLDAVFMPVTKINCIIEENNVYSDFSTDPSLEFSTHLVPSLTTQTNLRQESTHKFVNKANSLLQENNLFRSEKVYLPNIYIPEGEGDALSLKGVSPYSDFKTFLSTLNYNSLYQTSLFLNQSLGQNKLLPWQANTLFFDVTNFADSQSNDVNMNMDLAGDKTSVQKIHSTGISNTDAQLNKLSLTKIKSFLGSSDKLQNKTYQSFLQPKYASSNLRTLLTQRSLQKNQSVFMHSFLDDQAKHKELTSNTLRANKFQVMKTVVSIPPKTFKTNPINTFHNQSLTFEYARKF.

The tract at residues 1-333 (MTIYPNLKKI…QENNLFRSEK (333 aa)) is alpha N-terminal domain (alpha-NTD). The segment at 185–258 (TTLKKRNILL…TSLGHDTVSN (74 aa)) is insert. The interval 378–550 (FLNQSLGQNK…SLTFEYARKF (173 aa)) is alpha C-terminal domain (alpha-CTD).

The protein belongs to the RNA polymerase alpha chain family. In terms of assembly, in plastids the minimal PEP RNA polymerase catalytic core is composed of four subunits: alpha, beta, beta', and beta''. When a (nuclear-encoded) sigma factor is associated with the core the holoenzyme is formed, which can initiate transcription.

It is found in the plastid. The protein resides in the chloroplast. The enzyme catalyses RNA(n) + a ribonucleoside 5'-triphosphate = RNA(n+1) + diphosphate. Functionally, DNA-dependent RNA polymerase catalyzes the transcription of DNA into RNA using the four ribonucleoside triphosphates as substrates. The polypeptide is DNA-directed RNA polymerase subunit alpha (rpoA) (Chlamydomonas reinhardtii (Chlamydomonas smithii)).